A 205-amino-acid chain; its full sequence is Guanylate kinase (205 aa).

The 179-residue stretch at 5–183 folds into the Guanylate kinase-like domain; sequence GLLIVFSGPS…AAERVKKIIE (179 aa). Residue 12-19 coordinates ATP; it reads GPSGVGKG.

Belongs to the guanylate kinase family.

It localises to the cytoplasm. The enzyme catalyses GMP + ATP = GDP + ADP. Its function is as follows. Essential for recycling GMP and indirectly, cGMP. In Lactococcus lactis subsp. lactis (strain IL1403) (Streptococcus lactis), this protein is Guanylate kinase (gmk).